An 847-amino-acid chain; its full sequence is MKLLKLPSKLHDGQLTQCEVDDNKLYIIGGKYLSIWDSQTLLNAATGKTDVKEVKELEKMSLDLLESNQEDGRWLVVLDNQRLVYGSDHLLACLDLNKDSNSEYKSREIGIFKDNEAITDLKYDKVNGLLFVSLSKANSLQIMDSKTWELKSSIELKSKPISIITDPLGQLLTVILQNRSVQIYQYDSHGTTKLHQSINQFVQTNPLPYRMTMSPQGDVIPMINSLHNNVPTAVLLDRIQKFKIKLSLVGYVADCKILKFSPRIYSKTKSPTSNDTQTFNLLASSGNEDGNVVVWNTNRIKPLFDASKVVNSYITDLEWDNSGLGLFAISQDGQLVIFAFQENELGDVMPVEAVTEAAKEIKLLDPLPFKPKAEEPDTKLPPNKTAQQTTTNSKKQPKAAEITTISSTNMEFIQPSYMVPKDLKRKPVTEDPLLAQNKPANKKAKKELDQIDFLDTNLFLPSVSFSKVRLAHPKIRASFQYSSQGNFVLDIKNGLGNDQKPTSITLTRKDNESSKQLFQTFLPKFVTLCSAGSSFWAWSTDTGMIYVTSISGQMLFPPMLLGVPVSFLEGSGDYLLCITSIGQMYCWNVNTGKIAFPINDVYSLLNPMLRYSDDVLSRAENITMCAVTSQGIPIVTLSNGDGYMFDSAMEAWMLINDSWWPYGSQYWNFMSSAGVDLTSNDDEKKDKYWNAEADILAKEVKNNKNSIINYLETKTNDELTRKGRMKHLQRFAKVLLMKEGFENLEEMITLAHLENKILVSFRLKEVEEAIRLLKIYCIRIAEMGYTDRFSQTLSWLYDPTNTKFSPLDIDRRRNLIKDIIISCANIRQVQRVTTSYANELGVISDSL.

WD repeat units follow at residues 10-46 (LHDGQLTQCEVDDNKLYIIGGKYLSIWDSQTLLNAAT), 113-153 (KDNE…LKSS), 155-194 (ELKSKPISIITDPLGQLLTVILQNRSVQIYQYDSHGTTKL), 259-305 (KFSP…PLFD), and 309-348 (VVNSYITDLEWDNSGLGLFAISQDGQLVIFAFQENELGDV). Residues 368–399 (PFKPKAEEPDTKLPPNKTAQQTTTNSKKQPKA) are disordered. The span at 384 to 394 (KTAQQTTTNSK) shows a compositional bias: polar residues. WD repeat units lie at residues 508–548 (RKDN…IYVT) and 558–597 (PMLLGVPVSFLEGSGDYLLCITSIGQMYCWNVNTGKIAFP).

It belongs to the WD repeat HIR1 family.

It is found in the nucleus. In terms of biological role, required for replication-independent chromatin assembly and for the periodic repression of histone gene transcription during the cell cycle. This is Protein HIR2 (HIR2) from Kluyveromyces lactis (strain ATCC 8585 / CBS 2359 / DSM 70799 / NBRC 1267 / NRRL Y-1140 / WM37) (Yeast).